The sequence spans 255 residues: Cathepsin G (255 aa).

An N-terminal signal peptide occupies residues 1 to 18 (MQPLLLLLAFLLPTGAEA). Residues 19–20 (GE) constitute a propeptide, activation peptide. Residues 21–25 (IIGGR) are important for antimicrobial activity. Residues 21–243 (IIGGRESRPH…FLPWIRTTMR (223 aa)) form the Peptidase S1 domain. Cysteine 49 and cysteine 65 form a disulfide bridge. Histidine 64 functions as the Charge relay system in the catalytic mechanism. N-linked (GlcNAc...) (complex) asparagine; alternate glycosylation is present at asparagine 71. Asparagine 71 carries N-linked (GlcNAc...) (paucimannose) asparagine; alternate glycosylation. The segment at 97–111 (HPQYNQRTIQNDIML) is important for antimicrobial activity. Aspartate 108 functions as the Charge relay system in the catalytic mechanism. Cystine bridges form between cysteine 142/cysteine 207 and cysteine 172/cysteine 186. Residue serine 201 is the Charge relay system of the active site. The propeptide occupies 245 to 255 (FKLLDQMETPL).

The protein belongs to the peptidase S1 family. In terms of assembly, (Microbial infection) Interacts with CASP4; the interaction is promoted by the Td92 surface protein of the periodontal pathogen T.denticola and leads to CASP4 activation. As to quaternary structure, (Microbial infection) Interacts with M.tuberculosis protein Rv3364c. (Microbial infection) Interacts with S.aureus EapH1; EapH1 acts as a reversible inhibitor of CATG activity. Two C-terminal truncation variants have been identified, one which ends at Arg-243 and one which ends at Ser-244. In terms of tissue distribution, expressed in neutrophils (at protein level). Expressed in B cells.

It is found in the cell membrane. The protein resides in the cytoplasmic granule. It localises to the secreted. Its subcellular location is the cytoplasm. The protein localises to the cytosol. It is found in the lysosome. The protein resides in the nucleus. It carries out the reaction Specificity similar to chymotrypsin C.. Inhibited by soybean trypsin inhibitor, benzamidine, the synthetic peptide R13K, Z-Gly-Leu-Phe-CH2Cl, phenylmethylsulfonyl fluoride, 3,4-dichloroisocoumarin, DFP, SBTI and alpha-1-antitrypsin. Inhibited by LPS from P.aeruginosa but not by LPS from S.minnesota. Not inhibited by elastinal, CMK, TLCK, ETDA or leupeptin. Its activity is regulated as follows. (Microbial infection) Inhibited reversibly by S.aureus EapH1. With respect to regulation, (Microbial infection) Activity is induced by the Td92 surface protein of the periodontal pathogen T.denticola. Its function is as follows. Serine protease with trypsin- and chymotrypsin-like specificity. Also displays antibacterial activity against Gram-negative and Gram-positive bacteria independent of its protease activity. Prefers Phe and Tyr residues in the P1 position of substrates but also cleaves efficiently after Trp and Leu. Shows a preference for negatively charged amino acids in the P2' position and for aliphatic amino acids both upstream and downstream of the cleavage site. Required for recruitment and activation of platelets which is mediated by the F2RL3/PAR4 platelet receptor. Binds reversibly to and stimulates B cells and CD4(+) and CD8(+) T cells. Also binds reversibly to natural killer (NK) cells and enhances NK cell cytotoxicity through its protease activity. Cleaves complement C3. Cleaves vimentin. Cleaves thrombin receptor F2R/PAR1 and acts as either an agonist or an inhibitor, depending on the F2R cleavage site. Cleavage of F2R at '41-Arg-|-Ser-42' results in receptor activation while cleavage at '55-Phe-|-Trp-56' results in inhibition of receptor activation. Cleaves the synovial mucin-type protein PRG4/lubricin. Cleaves and activates IL36G which promotes expression of chemokines CXCL1 and CXLC8 in keratinocytes. Cleaves IL33 into mature forms which have greater activity than the unprocessed form. Cleaves coagulation factor F8 to produce a partially activated form. Also cleaves and activates coagulation factor F10. Cleaves leukocyte cell surface protein SPN/CD43 to release its extracellular domain and trigger its intramembrane proteolysis by gamma-secretase, releasing the CD43 cytoplasmic tail chain (CD43-ct) which translocates to the nucleus. Cleaves CCL5/RANTES to produce RANTES(4-68) lacking the N-terminal three amino acids which exhibits reduced chemotactic and antiviral activities. During apoptosis, cleaves SMARCA2/BRM to produce a 160 kDa cleavage product which localizes to the cytosol. Cleaves myelin basic protein MBP in B cell lysosomes at '224-Phe-|-Lys-225' and '248-Phe-|-Ser-249', degrading the major immunogenic MBP epitope and preventing the activation of MBP-specific autoreactive T cells. Cleaves annexin ANXA1 and antimicrobial peptide CAMP to produce peptides which act on neutrophil N-formyl peptide receptors to enhance the release of CXCL2. Acts as a ligand for the N-formyl peptide receptor FPR1, enhancing phagocyte chemotaxis. Has antibacterial activity against the Gram-negative bacteria N.gonorrhoeae and P.aeruginosa. Likely to act against N.gonorrhoeae by interacting with N.gonorrhoeae penA/PBP2. Exhibits potent antimicrobial activity against the Gram-positive bacterium L.monocytogenes. Has antibacterial activity against the Gram-positive bacterium S.aureus and degrades S.aureus biofilms, allowing polymorphonuclear leukocytes to penetrate the biofilm and phagocytose bacteria. Has antibacterial activity against M.tuberculosis. Mediates CASP4 activation induced by the Td92 surface protein of the periodontal pathogen T.denticola, causing production and secretion of IL1A and leading to pyroptosis of gingival fibroblasts. Induces platelet aggregation which is strongly potentiated in the presence of ELANE. This Homo sapiens (Human) protein is Cathepsin G (CTSG).